A 256-amino-acid polypeptide reads, in one-letter code: LexA repressor (256 aa).

The segment at 1 to 31 (MTSQGRGTRRGGTRGNVRAFPEGPTDAGLTP) is disordered. The segment at residues 53 to 73 (VREIGEAVGLTSTSSVAHQLK) is a DNA-binding region (H-T-H motif). Catalysis depends on for autocatalytic cleavage activity residues S180 and K217.

This sequence belongs to the peptidase S24 family. In terms of assembly, homodimer.

It catalyses the reaction Hydrolysis of Ala-|-Gly bond in repressor LexA.. Represses a number of genes involved in the response to DNA damage (SOS response), including recA and lexA. In the presence of single-stranded DNA, RecA interacts with LexA causing an autocatalytic cleavage which disrupts the DNA-binding part of LexA, leading to derepression of the SOS regulon and eventually DNA repair. This is LexA repressor from Frankia casuarinae (strain DSM 45818 / CECT 9043 / HFP020203 / CcI3).